Consider the following 394-residue polypeptide: MTQLETRTEPMVVNFGPHHPSMHGVLRLVVTLDGEDVVDCEPVIGYLHRGMEKIAENRTNVMFVPYVSRMDYAAGMFYEAVVVNAPEKLADIPVPKRASYIRVLMLELNRIANHLLWLGPFLADVGAQTPFFYIFREREMIYDLWEAATGQRLINNNYFRIGGVAADLPWGWLEKCRDFCDWFGPKIDEYEKLITNNPIFRRRIEGLGVIGKEEAINWSLSGPMLRASGVPWDLRKVDHYECYDDFDWDVAWEKEGDCFARYRVRIEEMRQSLKILRQACDMIPGGPTENVEARRMAEGKDSEFAGFDYQYVAKKVAPTFKIPNGELYTRLESGKGEIGIFIQGNNDVTPWRFKIRAADSNNLQILPHILKGHKVADIMAILGSIDVIMGSVDR.

Belongs to the complex I 49 kDa subunit family. NDH-1 can be composed of about 15 different subunits; different subcomplexes with different compositions have been identified which probably have different functions.

Its subcellular location is the cellular thylakoid membrane. The catalysed reaction is a plastoquinone + NADH + (n+1) H(+)(in) = a plastoquinol + NAD(+) + n H(+)(out). It carries out the reaction a plastoquinone + NADPH + (n+1) H(+)(in) = a plastoquinol + NADP(+) + n H(+)(out). Its function is as follows. NDH-1 shuttles electrons from an unknown electron donor, via FMN and iron-sulfur (Fe-S) centers, to quinones in the respiratory and/or the photosynthetic chain. The immediate electron acceptor for the enzyme in this species is believed to be plastoquinone. Couples the redox reaction to proton translocation, and thus conserves the redox energy in a proton gradient. Cyanobacterial NDH-1 also plays a role in inorganic carbon-concentration. In Synechococcus sp. (strain WH7803), this protein is NAD(P)H-quinone oxidoreductase subunit H.